Here is a 2414-residue protein sequence, read N- to C-terminus: METGSPGLNMKPQSLQLVLEGQVLALQQQMAENQAASWRKLKNSQEAQKRQATLVRKLQAKVLQYRSWCQDLEKRLEATGGLIPQRWESVEEPNLEQLLIRLEEEQQRCESLVEVNTELRLHMEKADVVNKALQEDVEKLTVDWSRARDELVRKESQWRMEQEFFKGYLRGEHGRLLNLWREVVTFRRHFLKMKSATDRDLTELKAEHARLSGSLLTCCLRLTLRAQSRESSGSGRTEESEPARLLLLVAKTQALEKEAHEKSQELMQLKSHGDLEKAELQDRVTELSALLTQSQKQNEDYEKMVKALRETMEILETNHAELMEHEASLSRNAQEEKLSLQQVIKAITQALASVEEEDTVTQSSGHEDSLQSDCNGLSQFDPQDPDRALTLVQSVLTRRQQAVQDLRQQLSGCQEAMSFLQQQHDQWEEEGRALREKLQKLTGERDALAGQTVGLQGEVDSLSRERELLQKARGELQQQLEVLEQEAWRLRRMNMELQLQGDSAQGEKLEQQEELHLAVRERERLQETLVGLEAKQSESLSELLTLREALESSRLEGELLKQERVEVAAALARAEQSIVELSGSENSLKAEVADLRAAAVKLGALNEALALDKVELNQQLLQLEQENQSLCSRVEAAEQLRSALQVDLAEAERRREALWEKKTQLETQLQKAEEAGAELQAELRGTREEKEELKDKLSEAHHQQETATAHLEQLHQDAERQEETLARAVQEKEALVRERAALEVRLQAVERDRQDLTEHVLGLRSAKEQLESNLFEAQQQNSVIQVTKGQLEVQIQTIIQAKEVIQGEVKCLKLELDAERTRAEQEWDAVARQLAQAEQEGQASLERQKVAHEEEVNRLQEKWEKERSWLQQELDKTLETLERERAELETKLREQQTEMEAIRAQREEERSQADSALYQMQLETEKERVSLLETLLRTQKELADASQQLERLRQDMKIQKLKEQETTGMLQAQLQETQQELKEAAQQHRDDLAAFQKDKLDLQKQVEDLMSQLVAHDDSQRLVKEEIEEKVKVAQECSRIQKELEKENASLALSLVEKEKRLLILQEADSVRQQELSSLRQDIQEAQEGQRELGVQVELLRQEVKEKEADFVAREAQLLEELEASRVAEQQLRASLWAQEAKATQLQLQLRSTESQLEALVAEQQPENQAQAQLASLCSVLQQALGSACESRPELRGGGDSAPTLWGPDPDQNGASRLFKRWSLPTALSPEAVALALQKLHQDVWKARQARDDLRDQVQKLVQRLTDTEAQKSQVHSELQDLQRQLSQSQEEKSKWEGRQNSLESELRDLHETAASLQSRLRQAELQKMEAQNDRELLQASKEKLSAQVEHLQACVAEAQAQADAAAVLEEDLRTARSALKLKNEELESERERAQALQEQGELKVAQGKALQENLALLAQTLSNREREVETLQAEVQELEKQREMQKAALELLSLDLKKRSREVDLQQEQIQELEQCRSVLEHLPMAVQEREQKLSVQRDQIRELENDREAQRSVLEHQLLDLEQKAQVIESQRGQIQDLKKQLGTLECLALELEESHHKVESQQKMITELEGQREMQRVALTHLTLDLEERSQELQAQSSQLHELENHSTHLAKELQERDQEVTSQRQQIDELQKQQEQLAQALERKGQELVLQKERIQVLEDQRTLQTKILEEDLEQIKHSLRERSQELASQWQLVHERADDGKSPSKGQRGSLEHLKLILRDKEKEVECQQERIQELQGHMGQLEQQLQGLHRKVGETSLLLTHREQETATLQQHLQEAKEQGELREQVLQGQLEEAQRDLAQRDHELETLRQEKQQTQDQEESMKLKTSALQAALEQAHATLKERQGELEEHREQVRRLQEELEVEGRQVRALEEVLGDLRAESREHEKAVLALQQRCAEQAQEHEAEARTLQDSWLQAQATLTEQEQELAALRAENQYSRRQEEAAVSQAEALQEALSKAQAALQEKEQSLLEQAELSHTLEASTAALQATLDTCQASARQLEEALRIREGEIQAQALQHHEVTQHLQQELCQKKEELRQLLEKAGARRSQENGIQEKQSLEQERQEETRRLLESLKELQLTVAQREEEILMLREASSPRHRALPAEKPALQPLPAQQELERLQTALRQTEAREIEWREKAQDLALSLAQSKASISSLQEITMFLQASVLERESEQQRLQEELVLSRQALEEQQSGGPHSTSRADQGPKVGQGSQSGEVETEPSPGVEEKERLTQRLERLQQAVAELEVDRSKLQCHNAQLRTALEQVERERRKLKRDSVRASRAGSLEARETMTSSPTQQDGRGSQRGSSDSVLVVELQREVALLRAQLALERKQRQDYIARSVQTSRELAGLHHSLSHSLLTVAQAPEATVLEAETRKLDESLNQSLTSPGPCLLHPSLDTTQNTHR.

Coiled-coil stretches lie at residues glutamate 91–arginine 153 and leucine 248–glutamate 357. Disordered stretches follow at residues glutamate 356–aspartate 384, alanine 672–alanine 707, serine 1191–glutamine 1212, glutamate 1269–leucine 1303, alanine 2050–glutamine 2071, alanine 2194–leucine 2238, and arginine 2275–aspartate 2317. Over residues glutamine 371 to aspartate 381 the composition is skewed to polar residues. A coiled-coil region spans residues glutamine 400–glutamine 1165. Residues arginine 684–glutamine 704 are compositionally biased toward basic and acidic residues. 2 coiled-coil regions span residues leucine 1237–serine 2200 and glycine 2231–alanine 2290. The span at glutamine 1280–serine 1289 shows a compositional bias: low complexity. Positions glutamate 2196 to alanine 2209 are enriched in polar residues. Positions arginine 2275 to arginine 2286 are enriched in basic and acidic residues. Serine 2292 is modified (phosphoserine). Positions glutamine 2305 to aspartate 2317 are enriched in low complexity. Residues leucine 2320–tyrosine 2345 are a coiled coil. Phosphoserine; by NEK2 is present on residues serine 2389 and serine 2393. The interval leucine 2390–arginine 2414 is disordered.

As to quaternary structure, monomer and homodimer. Forms a complex in vitro with both NEK2 kinase and the PPP1CC catalytic subunit of protein phosphatase 1 (PP1). Interacts with CEP135. Interacts with CROCC/rootletin. Interacts with CNTLN. Interacts with NIN (via C-terminus). In terms of processing, differentially phosphorylated during cell cycle. Phosphorylation may regulate association/dissociation from centrosome. During M phase of mitosis, C-terminal part is phosphorylated by NEK2, suggesting that it may trigger the dissociation from the mitotic centrosome. Dephosphorylated in vitro by the PP1 phosphatase. As to expression, expressed in the retina.

The protein localises to the cytoplasm. The protein resides in the perinuclear region. Its subcellular location is the cytoskeleton. It is found in the microtubule organizing center. It localises to the centrosome. The protein localises to the centriole. The protein resides in the cilium basal body. Its subcellular location is the cell projection. It is found in the cilium. It localises to the photoreceptor outer segment. The protein localises to the photoreceptor inner segment. In terms of biological role, plays an important role in centrosome cohesion during interphase. Recruits CCDC102B to the proximal ends of centrioles. Maintains centrosome cohesion by forming intercentriolar linkages. Accumulates at the proximal end of each centriole, forming supramolecular assemblies with viscous material properties that promote organelle cohesion. May be involved in ciliogenesis. This Mus musculus (Mouse) protein is Centrosome-associated protein CEP250 (Cep250).